The following is a 385-amino-acid chain: Tyrosine--tRNA ligase 1, cytoplasmic (385 aa).

A 'HIGH' region motif is present at residues 77 to 85 (PSGRMHIAQ). Residues Y200, Q204, D207, and Q222 each contribute to the L-tyrosine site. The 'KMSKS' region signature appears at 259-263 (KMSKS). Residue K262 participates in ATP binding.

It belongs to the class-I aminoacyl-tRNA synthetase family.

Its subcellular location is the cytoplasm. It localises to the cytosol. It carries out the reaction tRNA(Tyr) + L-tyrosine + ATP = L-tyrosyl-tRNA(Tyr) + AMP + diphosphate + H(+). Functionally, catalyzes the attachment of tyrosine to tRNA(Tyr) in a two-step reaction: tyrosine is first activated by ATP to form Tyr-AMP and then transferred to the acceptor end of tRNA(Tyr). The protein is Tyrosine--tRNA ligase 1, cytoplasmic of Arabidopsis thaliana (Mouse-ear cress).